The sequence spans 352 residues: 4-hydroxy-2-oxovalerate aldolase 5 (352 aa).

Residues isoleucine 9–isoleucine 261 enclose the Pyruvate carboxyltransferase domain. Substrate is bound at residue arginine 17–aspartate 18. Position 18 (aspartate 18) interacts with Mn(2+). Catalysis depends on histidine 21, which acts as the Proton acceptor. 2 residues coordinate substrate: serine 171 and histidine 200. The Mn(2+) site is built by histidine 200 and histidine 202. Tyrosine 291 lines the substrate pocket.

The protein belongs to the 4-hydroxy-2-oxovalerate aldolase family.

It carries out the reaction (S)-4-hydroxy-2-oxopentanoate = acetaldehyde + pyruvate. This is 4-hydroxy-2-oxovalerate aldolase 5 from Rhodococcus opacus (strain B4).